Here is a 445-residue protein sequence, read N- to C-terminus: Probable D-serine dehydratase (445 aa).

At lysine 111 the chain carries N6-(pyridoxal phosphate)lysine.

The protein belongs to the serine/threonine dehydratase family. DsdA subfamily. The cofactor is pyridoxal 5'-phosphate.

The catalysed reaction is D-serine = pyruvate + NH4(+). This is Probable D-serine dehydratase from Burkholderia pseudomallei (strain 668).